The chain runs to 259 residues: Light-harvesting complex stress-related protein 3.1, chloroplastic (259 aa).

A chloroplast-targeting transit peptide spans 1–45 (MLANVVSRKASGLRQTPARATVAVKSVSGRRTTAAEPQTAAPVAA). Residue Tyr-51 coordinates chlorophyll b. Residues Phe-66, Glu-87, and His-90 each coordinate chlorophyll a. Arg-92 contacts chlorophyll b. The chain crosses the membrane as a helical span at residues 93–113 (VAMLAALGFVVGEQLQDFPLF). Gln-130 lines the chlorophyll a pocket. The helical transmembrane segment at 137 to 157 (EPLLIAIGVAESYRVAVGWAT) threads the bilayer. Glu-147 and Arg-150 together coordinate chlorophyll b. Chlorophyll a contacts are provided by Lys-196, Glu-197, Asn-200, Arg-202, and Gln-214. The helical transmembrane segment at 203–223 (LAMIAIAAFVAQELVEQTEIF) threads the bilayer.

This sequence belongs to the light-harvesting chlorophyll a/b-binding (LHC) protein family. In terms of assembly, interacts with the photosystem II-light-harvesting complex II (PSII-LHCII) supercomplex to form PSII-LHCII-LHCSR3 supercomplex.

It localises to the plastid. It is found in the chloroplast thylakoid membrane. Required for non-photochemical quenching (NPQ), a mechanism that converts and dissipates the harmful excess absorbed light energy into heat and protect the photosynthetic apparatus from photo-oxidative damage. NPQ includes dissipating excess light energy to heat (qE) and the reversible coupling of LHCII to photosystems (state transitions or qT), which are considered separate NPQ mechanisms. Is responsible for most of the excess light energy to heat dissipation (qE), also known as energy-dependent chlorophyll fluorescence quenching activity of chlorophyll excited states. Involved in a de-coupling and re-coupling of energy transfer to photosystem II (PSII) during qT. Binds chlorophyll a and b. Is able to sense luminal acidification of the thylakoid membranes, which occurs along with elevated electron flow caused by excess light. Establishes interactions with photosystem II (PSII) antenna components upon lumen acidification, and protonation of lumen-exposed, negatively charged residues both in LHCSR3 and in PSII antenna components. Mediates excitation energy transfer from light-harvesting complex II (LHCII) to photosystem I (PSI), rather than photosystem II (PSII), at low pH, which mimics the acidified lumen of the thylakoid membranes in high light-exposed chloroplasts. Activates PSI-dependent fluorescence quenching in addition to dissipating excitation energy in LHCII to avoid photooxidative stress under excess light. Contributes with PGRL1 to the regulation of electron flow upstream of photosystem I (PSI), and limits the accumulation of electrons on the PSI acceptor side, thus avoiding PSI photoinhibition. This is Light-harvesting complex stress-related protein 3.1, chloroplastic from Chlamydomonas reinhardtii (Chlamydomonas smithii).